Consider the following 81-residue polypeptide: Defensin-like protein 313 (81 aa).

Positions 1–32 (MESKRSSSSPLLILITTIMIIFIISGPKSVDA) are cleaved as a signal peptide. 3 disulfide bridges follow: Cys34-Cys63, Cys45-Cys74, and Cys49-Cys76.

The protein belongs to the DEFL family.

The protein localises to the secreted. This Arabidopsis thaliana (Mouse-ear cress) protein is Defensin-like protein 313.